The sequence spans 385 residues: 1-deoxy-D-xylulose 5-phosphate reductoisomerase (385 aa).

The NADPH site is built by T13, G14, S15, I16, N40, and N122. A 1-deoxy-D-xylulose 5-phosphate-binding site is contributed by K123. E124 contributes to the NADPH binding site. D148 contributes to the Mn(2+) binding site. 1-deoxy-D-xylulose 5-phosphate contacts are provided by S149, E150, S177, and H200. E150 serves as a coordination point for Mn(2+). NADPH is bound at residue G206. 1-deoxy-D-xylulose 5-phosphate-binding residues include S213, N218, K219, and E222. Mn(2+) is bound at residue E222.

The protein belongs to the DXR family. Requires Mg(2+) as cofactor. It depends on Mn(2+) as a cofactor.

It carries out the reaction 2-C-methyl-D-erythritol 4-phosphate + NADP(+) = 1-deoxy-D-xylulose 5-phosphate + NADPH + H(+). It functions in the pathway isoprenoid biosynthesis; isopentenyl diphosphate biosynthesis via DXP pathway; isopentenyl diphosphate from 1-deoxy-D-xylulose 5-phosphate: step 1/6. Functionally, catalyzes the NADPH-dependent rearrangement and reduction of 1-deoxy-D-xylulose-5-phosphate (DXP) to 2-C-methyl-D-erythritol 4-phosphate (MEP). This chain is 1-deoxy-D-xylulose 5-phosphate reductoisomerase, found in Francisella tularensis subsp. holarctica (strain FTNF002-00 / FTA).